The chain runs to 154 residues: Low molecular weight protein-tyrosine-phosphatase PtpA (154 aa).

Catalysis depends on cysteine 8, which acts as the Nucleophile. Residue arginine 14 is part of the active site. The active-site Proton donor is aspartate 120.

Belongs to the low molecular weight phosphotyrosine protein phosphatase family.

It catalyses the reaction O-phospho-L-tyrosyl-[protein] + H2O = L-tyrosyl-[protein] + phosphate. Its function is as follows. Dephosphorylates the phosphotyrosine-containing proteins. The sequence is that of Low molecular weight protein-tyrosine-phosphatase PtpA (ptpA) from Staphylococcus saprophyticus subsp. saprophyticus (strain ATCC 15305 / DSM 20229 / NCIMB 8711 / NCTC 7292 / S-41).